We begin with the raw amino-acid sequence, 149 residues long: FAD synthase (149 aa).

ATP contacts are provided by residues Val-15 to Phe-16, His-20 to His-23, and Asp-101.

The protein belongs to the archaeal FAD synthase family. As to quaternary structure, homodimer. It depends on a divalent metal cation as a cofactor.

It catalyses the reaction FMN + ATP + H(+) = FAD + diphosphate. Its pathway is cofactor biosynthesis; FAD biosynthesis; FAD from FMN: step 1/1. Its function is as follows. Catalyzes the transfer of the AMP portion of ATP to flavin mononucleotide (FMN) to produce flavin adenine dinucleotide (FAD) coenzyme. The sequence is that of FAD synthase from Thermococcus kodakarensis (strain ATCC BAA-918 / JCM 12380 / KOD1) (Pyrococcus kodakaraensis (strain KOD1)).